The chain runs to 426 residues: Glutamate-1-semialdehyde 2,1-aminomutase (426 aa).

The residue at position 265 (Lys-265) is an N6-(pyridoxal phosphate)lysine.

This sequence belongs to the class-III pyridoxal-phosphate-dependent aminotransferase family. HemL subfamily. In terms of assembly, homodimer. Requires pyridoxal 5'-phosphate as cofactor.

It localises to the cytoplasm. The enzyme catalyses (S)-4-amino-5-oxopentanoate = 5-aminolevulinate. It functions in the pathway porphyrin-containing compound metabolism; protoporphyrin-IX biosynthesis; 5-aminolevulinate from L-glutamyl-tRNA(Glu): step 2/2. The polypeptide is Glutamate-1-semialdehyde 2,1-aminomutase (Escherichia coli O139:H28 (strain E24377A / ETEC)).